Reading from the N-terminus, the 547-residue chain is uncharacterized protein (547 aa).

The protein to B.pertussis prn N-terminal region.

This is an uncharacterized protein from Escherichia coli O157:H7.